A 59-amino-acid polypeptide reads, in one-letter code: Conotoxin Sr5.4 (59 aa).

Residues 1–22 (MRCLPVFVILLLLIASAPSVDA) form the signal peptide. A propeptide spanning residues 23–44 (QLKTKDDVPLASFHDNAKGTQH) is cleaved from the precursor.

This sequence belongs to the conotoxin T superfamily. In terms of processing, contains 2 disulfide bonds that can be either 'C1-C3, C2-C4' or 'C1-C4, C2-C3', since these disulfide connectivities have been observed for conotoxins with cysteine framework V (for examples, see AC P0DQQ7 and AC P81755). As to expression, expressed by the venom duct.

It localises to the secreted. This Conus spurius (Alphabet cone) protein is Conotoxin Sr5.4.